Consider the following 113-residue polypeptide: Gonadotropin subunit beta (113 aa).

6 disulfides stabilise this stretch: Cys6-Cys54, Cys20-Cys69, Cys23-Cys107, Cys31-Cys85, Cys35-Cys87, and Cys90-Cys97. Asn10 is a glycosylation site (N-linked (GlcNAc...) asparagine).

The protein belongs to the glycoprotein hormones subunit beta family. Heterodimer of an alpha and a beta chain.

Its subcellular location is the secreted. Its function is as follows. Involved in gametogenesis and steroidogenesis. The sequence is that of Gonadotropin subunit beta (cgb) from Muraenesox cinereus (Daggertooth pike conger).